Consider the following 108-residue polypeptide: Nucleoid-associated protein CPS_3743 (108 aa).

The disordered stretch occupies residues 87 to 108 (NKDKMGALTGGMQLPPGMKMPF).

The protein belongs to the YbaB/EbfC family. As to quaternary structure, homodimer.

Its subcellular location is the cytoplasm. The protein localises to the nucleoid. Its function is as follows. Binds to DNA and alters its conformation. May be involved in regulation of gene expression, nucleoid organization and DNA protection. In Colwellia psychrerythraea (strain 34H / ATCC BAA-681) (Vibrio psychroerythus), this protein is Nucleoid-associated protein CPS_3743.